The primary structure comprises 215 residues: MTTSATPMAAVDLLQQALNSNIIPNQEYLLQGSILDSAAEHLLHRLRGLCDNVDTGPEAFADYEMCLSLKVPNEKTPVMTVRVRKAQDTDAPYQLRYIGQPELGDRNRPTLVRSSLDIACTPHVVDFLTEMGFRVDFEYITKGYMFRKGRMKVTVSKIFKVNSSEPISQSYLVELSVLAPTGQDVIADDMRIFAEQLKPLVQLEKIDYKRFAQMP.

The protein belongs to the Mediator complex subunit 18 family. As to quaternary structure, component of the Mediator complex.

The protein localises to the nucleus. Component of the Mediator complex, a coactivator involved in the regulated transcription of nearly all RNA polymerase II-dependent genes. Mediator functions as a bridge to convey information from gene-specific regulatory proteins to the basal RNA polymerase II transcription machinery. Mediator is recruited to promoters by direct interactions with regulatory proteins and serves as a scaffold for the assembly of a functional preinitiation complex with RNA polymerase II and the general transcription factors. The sequence is that of Mediator of RNA polymerase II transcription subunit 18 (MED18) from Aedes aegypti (Yellowfever mosquito).